Consider the following 12345-residue polypeptide: Muscle-specific protein 300 kDa (12345 aa).

2 disordered regions span residues 1-68 (MADS…STVT) and 121-152 (WSDG…DAEN). The Cytoplasmic portion of the chain corresponds to 1–12295 (MADSGGPGSK…GARFLGRVAR (12295 aa)). Over residues 19–28 (AGGGGAGAAG) the composition is skewed to gly residues. The span at 45 to 60 (EQKSSREQVLEEEKSQ) shows a compositional bias: basic and acidic residues. Residues 249-273 (FKELENFLEGERTVREVPSADGVRT) form an LRR 1 repeat. 3 disordered regions span residues 295-325 (EGYV…RSVD), 387-488 (TVQV…RKLI), and 504-526 (GKSN…GRPA). Over residues 299–321 (SPRDSPSWSRSSYSSERSSVTPP) the composition is skewed to low complexity. Polar residues-rich tracts occupy residues 387 to 404 (TVQV…STPQ) and 414 to 434 (TTKT…QTGP). Low complexity predominate over residues 462-484 (TITSTTTKSTSSSTSATSSSSTS). A compositionally biased stretch (acidic residues) spans 511-520 (NDIDIDNDSD). Calponin-homology (CH) domains are found at residues 630–737 (RVQK…LYFQ) and 777–882 (QGAR…HKYP). The LRR 2 repeat unit spans residues 823 to 847 (LVNLAELKKTSNRQRLETAFDVAES). The stretch at 919–952 (SSFPRDFGEYLLARSEVDAHLAAYNRLKQLIESQ) is one TPR 1 repeat. LRR repeat units follow at residues 1089-1112 (CCLI…YGHE), 1389-1411 (HLFH…IHQW), and 1616-1642 (LKDV…ILQR). A TPR 2 repeat occupies 1603 to 1636 (LEFRLDENAFYQSLKDVEKELQLEQQALNRNEDV). The stretch at 1903–1935 (TGWNQAYTETSDKLQALKGTQAVWSEFVDQKND) is one HAT 1 repeat. 2 LRR repeats span residues 2087 to 2109 (KQLD…IAEA) and 2558 to 2581 (QQQI…FGQA). In terms of domain architecture, Calponin-homology (CH) 3 spans 2109–2233 (AKRLKGEITK…SRWTAVHENA (125 aa)). The stretch at 2663-2696 (ADRIQKYNLISQALREYADSKDKFSKELKKAEDL) is one TPR 3 repeat. The disordered stretch occupies residues 2699-2724 (AIPQQPRDETELHQASEKTRKTMEQL). The segment covering 2704–2724 (PRDETELHQASEKTRKTMEQL) has biased composition (basic and acidic residues). LRR repeat units lie at residues 2728–2751 (KLSL…IGEP), 2935–2959 (CRAL…VDEL), and 3030–3053 (SSDK…IDDC). Positions 2894–2962 (EQELRRRSKE…KQKVDELRNL (69 aa)) form a coiled coil. The stretch at 3110–3207 (LWSQYEQSNE…AVSKALTSYI (98 aa)) is one Spectrin 1 repeat. The TPR 4 repeat unit spans residues 3346 to 3379 (KAKVPTTDELYPTLATKKAALQNYKTQLQEITLH). LRR repeat units follow at residues 3370 to 3393 (KTQL…AVTL), 3437 to 3462 (LEKA…TFEK), 3530 to 3556 (LVKL…WMKN), and 3611 to 3634 (NLKL…SIAK). The stretch at 3539–3633 (KWDEFDTIIE…LKNLCKESIA (95 aa)) is one Spectrin 2 repeat. The TPR 5 repeat unit spans residues 3629–3662 (KESIAKYVNYVKDHESFDKDFDSFKQNLQSSVDE). Residues 3706–3739 (KLYGHTSPEGREIIRQQLRALRTLWDNYTDDLNS) form an HAT 2 repeat. The LRR 15 repeat unit spans residues 3748–3771 (LLQFNEFSIAQDQLTKWLKDVDKA). One copy of the Spectrin 3 repeat lies at 4177–4273 (SYQDILNQTV…YDQVGQDCAK (97 aa)). A TPR 6 repeat occupies 4360-4393 (EVMARDLANLHADFEKFGASLSDVKSGLENRLQQ). The HAT 3 repeat unit spans residues 4371 to 4403 (ADFEKFGASLSDVKSGLENRLQQWNDYEINLDR). The stretch at 4611 to 4701 (FDEIADSLKS…GKLQKRAQNY (91 aa)) is one Spectrin 4 repeat. LRR repeat units lie at residues 4654–4676 (NDIN…LPEK) and 4742–4763 (EQIS…LADE). An HAT 4 repeat occupies 4799–4830 (EWESLLTTISSTIEAIEARLQHWSEYEQLRDQ). Residues 4820–4919 (HWSEYEQLRD…VKELNNRWQQ (100 aa)) form a Spectrin 5 repeat. One copy of the LRR 18 repeat lies at 4839–4863 (DNNLHAIDLKEDLPKKRAQLDALKA). The stretch at 4894–4926 (ASGPELVTKYQQIFHKVKELNNRWQQYVTSHED) is one HAT 5 repeat. 2 LRR repeats span residues 5266-5289 (QIDI…EKQV) and 5333-5357 (SSVY…RDQH). The TPR 7 repeat unit spans residues 5645-5678 (SAEPEDCEIIEQEVALLQEEFDAYREALNKAKDY). LRR repeat units lie at residues 5761–5784 (SNAI…VMRR), 5820–5843 (PGTL…FETG), and 5979–6002 (TKFD…VNSH). The stretch at 5791–5895 (EHQQHHSLYE…DLNDVRQKLA (105 aa)) is one Spectrin 6 repeat. One copy of the HAT 6 repeat lies at 6088-6120 (SEWETLQTISRDARSSLESCLAAWQTFLQKFNK). Spectrin repeat units follow at residues 6321-6405 (RWND…DKLK) and 6424-6530 (AYHQ…RLLE). Coiled coils occupy residues 6356-6397 (MKTL…VNRL) and 6454-6484 (REQT…LNAK). The stretch at 6363–6387 (YKTLSNELKLKGNELEQLQSEARDL) is one LRR 24 repeat. The TPR 8 repeat unit spans residues 6522–6555 (VQIKNRLLESLAKFQEYEDTLDSIMRNLETYEPI). LRR repeat units lie at residues 6531-6554 (SLAK…TYEP) and 6560-6587 (LDAP…LNNE). Residues 6567–6597 (LELAQNQLRCAQEMQNKLNNEKSRLAAAVQA) are a coiled coil. The disordered stretch occupies residues 6631–6657 (EDLLDQKPPPKTRSSTGGVSTDDDKDE). Residues 6660–6695 (VEIQVELSDVNEALLDPIAHERVKNYRRIVRLNSAH) form a TPR 9 repeat. An LRR 27 repeat occupies 7004 to 7026 (SALRNLNTENRNLSGVLKAELDR). Residues 7161 to 7195 (EMETATEGELRTTSLPVLEEQLAHYKKLLSDAENK) form a TPR 10 repeat. LRR repeat units follow at residues 7219–7242 (LKLN…IDDR), 7300–7318 (KELK…DDLP), 7319–7339 (ELQS…DQLA), and 7340–7361 (HLRQ…IIAF). Residues 7419–7457 (KNSITEQLQSLKNQLQNLRKAVESQRQKHQLQLESHKKM) are a coiled coil. The stretch at 7524-7547 (SSLLEMLSEGRSLVASLPHELEER) is one LRR 32 repeat. The HAT 7 repeat unit spans residues 7644-7676 (TKLTNTLANAKTQQSELEKEAERWREYQQSIDR). The stretch at 7654–7687 (KTQQSELEKEAERWREYQQSIDRVKATIERTKFV) is one TPR 11 repeat. 3 LRR repeats span residues 7692–7714 (QNLA…VQSQ), 7752–7777 (QDLV…GFEN), and 7816–7840 (LREE…ILTF). One copy of the TPR 12 repeat lies at 7759 to 7792 (EQRRDNLQQLAEHWDGFENSLHAWEKALGRLEDK). A coiled-coil region spans residues 7799–7935 (TVRSRRHLED…NSQVQQAAEE (137 aa)). Residues 7878–7911 (SKDLEEIEQVFRRISQLQDKLNALHEQLQSVHVY) form a TPR 13 repeat. 4 LRR repeats span residues 8178–8201 (KISV…EWDQ), 8238–8264 (EKTL…HFRN), 8298–8321 (EQTL…IIQE), and 8354–8377 (DELL…SLDG). One copy of the TPR 14 repeat lies at 8431 to 8464 (QQGITMIANAMHGQKKRQQEIDEYQQHLLELEQW). One copy of the LRR 40 repeat lies at 8534-8557 (EQLQSIITILREQVTVATKRIFTI). Disordered stretches follow at residues 8583–8616 (IKPP…EEEI), 8966–9023 (QKPT…LPAP), 9131–9158 (EFEP…QVVA), 9361–9459 (GKES…PDSD), 9502–9735 (LVED…TSIS), and 9769–9797 (TMQL…EQQL). A compositionally biased stretch (polar residues) spans 8601–8611 (SNENTIDSSSM). Residues 8982 to 9011 (TQVTTTTRTTTATTQEQEQPEQQTQPTTTE) show a composition bias toward low complexity. Basic and acidic residues predominate over residues 9136–9151 (SPHEESTKSDLVKPQE). A compositionally biased stretch (basic residues) spans 9394–9404 (KRRRKKKKRRD). Positions 9410–9419 (ELEQEQETEP) are enriched in acidic residues. Positions 9420-9439 (EPVAAVKEPEVSSDVPVSPE) are enriched in low complexity. Residues 9440–9451 (DSPRDTVRHESI) show a composition bias toward basic and acidic residues. 3 stretches are compositionally biased toward polar residues: residues 9544–9563 (AVQT…SQTL), 9587–9597 (ISTTEIQTDVS), and 9605–9625 (EISS…TTPK). The span at 9658-9680 (TSEQSTVTETTTTTETHVQTTTP) shows a compositional bias: low complexity. Positions 9681 to 9698 (EPREQTEVIKPETAHEET) are enriched in basic and acidic residues. The stretch at 9699 to 9721 (STVELVQFADGEMQTTPPGDQQP) is one LRR 41 repeat. Over residues 9711–9735 (MQTTPPGDQQPASLDDSSLTATSIS) the composition is skewed to polar residues. Basic residues predominate over residues 9777 to 9788 (KKSKKDKKKKQK). LRR repeat units follow at residues 9995 to 10019 (SNVL…ILEV), 10073 to 10096 (EEKL…VVQL), 10252 to 10276 (KEFT…SLEQ), and 10353 to 10376 (RDEL…TSAD). 2 coiled-coil regions span residues 10072–10099 (SEEK…LERQ) and 10172–10257 (LSAK…FTKI). The stretch at 10231–10264 (QAERERVLQLQSLAEEYEQTLKEFTKITVLADKL) is one TPR 15 repeat. An HAT 8 repeat occupies 10426-10458 (IVLLKLREEVALYLHRLLVFKEIWVQYEQQTDK). 3 LRR repeats span residues 10512 to 10535 (EKSL…QLED), 10570 to 10593 (EREL…EEEL), and 10644 to 10667 (AEEL…ISNQ). A TPR 16 repeat occupies 10854 to 10888 (VVAWNDTSENLQQLRTRYQRAVELWDKYRNASAAV). An HAT 9 repeat occupies 10855–10887 (VAWNDTSENLQQLRTRYQRAVELWDKYRNASAA). LRR repeat units lie at residues 10907–10929 (DALQ…ILEL) and 11021–11043 (AHLQ…HQNS). The stretch at 11016 to 11046 (LAALRAHLQTLARTEEQLRQLKERHQNSEVA) forms a coiled coil. An HAT 10 repeat occupies 11070–11104 (DTFQEYHRLSTRLARSQNSSEALRLWRQYLQHVQS). A TPR 17 repeat occupies 11072 to 11105 (FQEYHRLSTRLARSQNSSEALRLWRQYLQHVQSF). One copy of the LRR 51 repeat lies at 11197 to 11222 (EAERNALQLRYIHLKRVPHLKHRLDA). 2 coiled-coil regions span residues 11220–11247 (LDAM…LARH) and 11281–11308 (LQRV…AQKL). 5 LRR repeats span residues 11342 to 11365 (SALE…DMKT), 11398 to 11422 (LSNY…VEKD), 11670 to 11692 (EELE…LAMS), 11697 to 11720 (PENI…LTPR), and 11744 to 11766 (EATN…ENQQ). Positions 11655–11685 (KHKLEERQMELRAKLEELESQSVNLRQLEQI) form a coiled coil. The stretch at 11776–11806 (LQRLESLEKKLQDAQQHVQQADNLAQEAKTR) forms a coiled coil. The HAT 11 repeat unit spans residues 11804 to 11836 (KTRTKQQPQLKQLLELVSAYTTLWQTVQTRIVT). 2 LRR repeats span residues 11959-11981 (DTVA…RQQH) and 12198-12220 (SRLT…YIVK). Residues 12253–12272 (SMQAAAPNTENANNTDGGDA) form a disordered region. Residues 12256–12267 (AAAPNTENANNT) are compositionally biased toward low complexity. The KASH domain occupies 12287–12345 (ARFLGRVARASLPIQALMLLLLGVATLVPHGEDYTCMFSNTFARSLEPMLSYPHGPPPT). The chain crosses the membrane as a helical; Anchor for type IV membrane protein span at residues 12296-12316 (ASLPIQALMLLLLGVATLVPH). One copy of the LRR 59 repeat lies at 12301-12323 (QALMLLLLGVATLVPHGEDYTCM). The Perinuclear space portion of the chain corresponds to 12317–12345 (GEDYTCMFSNTFARSLEPMLSYPHGPPPT).

The protein belongs to the nesprin family. As to quaternary structure, core component of LINC complexes which are composed of inner nuclear membrane SUN domain-containing proteins coupled to outer nuclear membrane KASH domain-containing nesprins. Interacts with klar; this interaction allows the anchoring of the Msp300 nuclear ring structure to the nuclear envelope. Interacts with sls; this interaction mediates the recruitment of Msp300 to the Z-disks.

Its subcellular location is the nucleus membrane. It is found in the cytoplasm. The protein localises to the myofibril. It localises to the sarcomere. The protein resides in the z line. Its subcellular location is the cytoskeleton. It is found in the microtubule organizing center. The protein localises to the perinuclear region. Its function is as follows. Component of the LINC (LInker of Nucleoskeleton and Cytoskeleton) complex involved in the connection between the nuclear lamina and the cytoskeleton. Collaborates with Klar to promote even spacing of the myonuclei at the periphery of striated muscle fibers by mediating a tight association between a nuclear ring structure of Msp300 and the plus ends of a unique astral MT network. In addition, is essential for anchoring nuclei, mitochondria and endoplasmic reticulum (ER) structures to the Z-disks. In fat body cells, part of perinuclear non-centrosomal microtubule-organizing centers (ncMTOCs) which function to accommodate the organization of microtubule (MT) networks to control nuclear positioning and dynein motor-based retrograde endosomal trafficking. Functions as the primary organizer of the ncMTOC by recruiting Patronin, shot and msps to the organizing centre. Within the ncMTOC, Msp300 and shot anchors the ncMTOC at the nuclear surface and recruits the MT minus-end regulators Patronin and Nin for assembly, anchoring and/or stabilization of circumferential and radial MTs at the ncMTOCs. Patronin, and perhaps Nin, recruits msps to the ncMTOC for the gamma-tubulin-independent elongation of radial MTs. This chain is Muscle-specific protein 300 kDa, found in Drosophila melanogaster (Fruit fly).